Here is a 323-residue protein sequence, read N- to C-terminus: D-alanine--D-alanine ligase (323 aa).

Positions 121 to 317 constitute an ATP-grasp domain; sequence RIWFLTNNIN…FTNLIEEIIK (197 aa). 147–199 contributes to the ATP binding site; it reads PMKRPYVIKPLAQGSSIGVEVIFAEDDFNFADYDFPYGDQVIIEQYIKGQGRE. Residues Glu270, Glu284, and Asn286 each contribute to the Mg(2+) site.

The protein belongs to the D-alanine--D-alanine ligase family. It depends on Mg(2+) as a cofactor. Mn(2+) is required as a cofactor.

It localises to the cytoplasm. The enzyme catalyses 2 D-alanine + ATP = D-alanyl-D-alanine + ADP + phosphate + H(+). Its pathway is cell wall biogenesis; peptidoglycan biosynthesis. Cell wall formation. In Rickettsia peacockii (strain Rustic), this protein is D-alanine--D-alanine ligase.